The sequence spans 448 residues: Trigger factor (448 aa).

A PPIase FKBP-type domain is found at 172-257; the sequence is GDRVTVDFVG…MKKIEWPHLP (86 aa).

The protein belongs to the FKBP-type PPIase family. Tig subfamily.

The protein resides in the cytoplasm. It catalyses the reaction [protein]-peptidylproline (omega=180) = [protein]-peptidylproline (omega=0). Its function is as follows. Involved in protein export. Acts as a chaperone by maintaining the newly synthesized protein in an open conformation. Functions as a peptidyl-prolyl cis-trans isomerase. This is Trigger factor from Burkholderia cenocepacia (strain HI2424).